We begin with the raw amino-acid sequence, 1002 residues long: yemanuclein (1002 aa).

The Nuclear localization signal signature appears at Lys80 to Lys85. Disordered stretches follow at residues Ala193–Val358, Val395–Asn428, and Lys642–Val725. Over residues Ser207–Ser217 the composition is skewed to low complexity. Positions Gly218 to Ser262 are enriched in acidic residues. 2 repeat units span residues Glu230–Glu241 and Glu242–Glu253. The segment at Glu230–Glu253 is 2 X 12 AA tandem repeats. Low complexity-rich tracts occupy residues Thr286–Thr320, Gln336–Val358, and Val395–Ser404. A compositionally biased stretch (basic and acidic residues) spans Glu408–Glu427. Over residues Pro653–Pro667 the composition is skewed to low complexity. Basic and acidic residues predominate over residues Ala679 to Ser689. A phosphoserine mark is found at Ser685 and Ser689. The segment covering Asp690–Ser701 has biased composition (low complexity). A phosphoserine mark is found at Ser885, Ser886, and Ser887. Residues Ser901 to Gln928 are disordered. The span at Pro903 to Asn917 shows a compositional bias: basic residues.

Post-translationally, the N-terminus is blocked. Oocyte specific.

It localises to the nucleus. Its subcellular location is the nucleoplasm. It is found in the chromosome. The protein localises to the centromere. The protein resides in the kinetochore. In terms of biological role, may play a key role in egg organization. May be a transcriptional regulator having a role in chromatin remodeling in concert with Hira, a histone chaperone. Involved in chromosome segregation by affecting kinetochores function in the first meiotic division. The protein is yemanuclein of Drosophila melanogaster (Fruit fly).